Reading from the N-terminus, the 325-residue chain is UPF0164 protein TP_0856 (325 aa).

A signal peptide spans 1 to 28 (MVHYKSVFYKSAALVCGFVLAGASVAIA).

It belongs to the UPF0164 family.

This is UPF0164 protein TP_0856 from Treponema pallidum (strain Nichols).